We begin with the raw amino-acid sequence, 524 residues long: Caffeate CoA-transferase (524 aa).

Glu-323 acts as the 5-glutamyl coenzyme A thioester intermediate in catalysis.

It belongs to the 3-oxoacid CoA-transferase family. Homodimer.

It carries out the reaction hydrocaffeoyl-CoA + (E)-caffeate = 3-(3,4-dihydroxyphenyl)propanoate + (E)-caffeoyl-CoA. In terms of biological role, involved in caffeate respiration, which consists in the reduction of the C-C double bond of caffeate. CarA catalyzes an energy-saving CoA loop for caffeate activation in the steady state of caffeate respiration. It catalyzes the formation of caffeyl-CoA from caffeate with hydrocaffeyl-CoA as the CoA donor via a ping-pong mechanism. In addition to caffeate, the enzyme can utilize 4-coumarate or ferulate as CoA acceptor. Neither acetyl-CoA nor butyryl-CoA served as the CoA donor. The sequence is that of Caffeate CoA-transferase from Acetobacterium woodii.